A 313-amino-acid chain; its full sequence is tRNA dimethylallyltransferase (313 aa).

Residue 10–17 (GPTASGKT) coordinates ATP. 12 to 17 (TASGKT) lines the substrate pocket. 3 interaction with substrate tRNA regions span residues 35–38 (DSAM), 159–163 (QRIQR), and 240–245 (RCVGYR).

It belongs to the IPP transferase family. As to quaternary structure, monomer. Requires Mg(2+) as cofactor.

The enzyme catalyses adenosine(37) in tRNA + dimethylallyl diphosphate = N(6)-dimethylallyladenosine(37) in tRNA + diphosphate. Its function is as follows. Catalyzes the transfer of a dimethylallyl group onto the adenine at position 37 in tRNAs that read codons beginning with uridine, leading to the formation of N6-(dimethylallyl)adenosine (i(6)A). In Legionella pneumophila (strain Corby), this protein is tRNA dimethylallyltransferase.